A 399-amino-acid polypeptide reads, in one-letter code: Homocysteine-responsive endoplasmic reticulum-resident ubiquitin-like domain member 2 protein (399 aa).

The 80-residue stretch at 10–89 folds into the Ubiquitin-like domain; sequence VTLVIKAPNQ…HMVHLVCASR (80 aa). Disordered stretches follow at residues 88–144 and 211–250; these read SRTP…SIRH and ASNQ…APEM. Residues 95 to 106 are compositionally biased toward polar residues; sequence PKASTSNKSMGT. Low complexity predominate over residues 107–124; the sequence is ASISRSSSEHSGSASPAS. A compositionally biased stretch (polar residues) spans 211–221; that stretch reads ASNQSPSNGEN. Positions 234–246 are enriched in pro residues; sequence SPPPNPPRAPPNV. Residues 299–319 form a helical membrane-spanning segment; the sequence is FVMVMGAMILVYMHQAGWFPL.

Its subcellular location is the membrane. Its function is as follows. Could be involved in the unfolded protein response (UPR) pathway. This chain is Homocysteine-responsive endoplasmic reticulum-resident ubiquitin-like domain member 2 protein (herpud2), found in Xenopus tropicalis (Western clawed frog).